A 931-amino-acid polypeptide reads, in one-letter code: MDSVATDSKAFTSADFDSAGIAAAVDALAKQHSGREDMFRAAVVQFLKAELVKARAAAQAQLLQDRHGRHCAERLCVVQDEIIRILYAAATEHLYRSDVPSGAERMAVVATGGYGRGLMAPESDIDLLFILPYKQTAWGEQVAEAILYSLWDMGLKVGHATRSVDESIRQARGDMTIRTAILETRYLAGDKPLYDELVQRFDTEVVQGTAAEFVAAKLAEREERHRRGGQSRYLVEPNVKDGKGGLRDLHTLFWIAKYVYRVRETAELVERGVFDAHEYRTFRRCSDFLWSVRCNLHFVSGRPEERLSFDLQREIAVRLGYTSHPGMQDVERFMKHYFLVAKQVGNLTAILCAKLEDQQAKAAPVLSRMISRLTTGSTWRRVPESDDFIVDNNRINLAAPDVFKHDPVNLIRIFRLAQKNNLAFHPDAMRAVTRSLNMINAELRENPEANRLFMEILTSNDAETVLRRMNETGVLGHFISAFGRIVSMMQFNMYHHYTVDEHLIRCIGFLQEIERGGHDEFVLASDLMRKIRPEHRAVIYITVLLHDVAKGRPEDHSVAGAKIARRLCPRLGFNNADTELVAWLIEEHLTMSTVAQSRDLSDRRTIEKFAAVVQSVEQMKLLTILTTADIRGVGPGVWNGWKAQLLRTLYYETEPVLTGGFSEVNRAKRITAAQAEFRNAFTDWPEDELNTYIGRHYPAYWLKVELPRKIRHARFVRSSEDAGHKLAINVGFDPARGVTELTIFAMDHPWLLSIIAGACASAGANIVDAQIYTTTDGRALDTIAISREYERDEDEGRRATRIGETIEQVLEGKLRLPDAVARRTTRGKQHKAFSVEPEVSINNQWSELYTVIEVSGLDRPGLLYELTTAISKLNLNIASAHVATFGERARDVFYVTDLLGAQINAPTRQAAIKSALLHLLASEDAAAQPAA.

The segment at 1–383 (MDSVATDSKA…TTGSTWRRVP (383 aa)) is uridylyltransferase. The interval 384 to 739 (ESDDFIVDNN…VGFDPARGVT (356 aa)) is uridylyl-removing. Positions 499–622 (VDEHLIRCIG…VQSVEQMKLL (124 aa)) constitute an HD domain. 2 ACT domains span residues 740–822 (ELTI…AVAR) and 851–931 (VIEV…QPAA).

This sequence belongs to the GlnD family. It depends on Mg(2+) as a cofactor.

It carries out the reaction [protein-PII]-L-tyrosine + UTP = [protein-PII]-uridylyl-L-tyrosine + diphosphate. The enzyme catalyses [protein-PII]-uridylyl-L-tyrosine + H2O = [protein-PII]-L-tyrosine + UMP + H(+). With respect to regulation, uridylyltransferase (UTase) activity is inhibited by glutamine, while glutamine activates uridylyl-removing (UR) activity. In terms of biological role, modifies, by uridylylation and deuridylylation, the PII regulatory proteins (GlnB and homologs), in response to the nitrogen status of the cell that GlnD senses through the glutamine level. Under low glutamine levels, catalyzes the conversion of the PII proteins and UTP to PII-UMP and PPi, while under higher glutamine levels, GlnD hydrolyzes PII-UMP to PII and UMP (deuridylylation). Thus, controls uridylylation state and activity of the PII proteins, and plays an important role in the regulation of nitrogen fixation and metabolism. This is Bifunctional uridylyltransferase/uridylyl-removing enzyme from Bradyrhizobium sp. (strain ORS 278).